The sequence spans 1100 residues: Guanylate cyclase 2G (1100 aa).

An N-terminal signal peptide occupies residues 1-43 (MASRARSEPPLEHRFYGGAESHAGHSSLVLTLFVVMLMTCLEA). Over 44–481 (AKLTVGFHAP…GAGMTASVTA (438 aa)) the chain is Extracellular. Residues Asn-55, Asn-85, Asn-94, Asn-418, and Asn-443 are each glycosylated (N-linked (GlcNAc...) asparagine). Residues 482–502 (VIPTVTLLVVASAAAITGLML) form a helical membrane-spanning segment. The Cytoplasmic portion of the chain corresponds to 503–1100 (WRLRGKVQNH…EEEAKVPEIL (598 aa)). The region spanning 549-826 (STVKISADCG…PAFPSIKKTL (278 aa)) is the Protein kinase domain. One can recognise a Guanylate cyclase domain in the interval 901–1031 (TIFFSDIVGF…DTVNMASRME (131 aa)).

The protein belongs to the adenylyl cyclase class-4/guanylyl cyclase family. As to quaternary structure, homooligomer. May interact with NPR1/GC-A. Post-translationally, N-glycosylated. As to expression, expressed in lung, kidney and skeletal muscle. Low levels in intestine.

It localises to the cell membrane. The protein resides in the cytoplasm. The catalysed reaction is GTP = 3',5'-cyclic GMP + diphosphate. This chain is Guanylate cyclase 2G (Gucy2g), found in Rattus norvegicus (Rat).